The sequence spans 576 residues: Arginine--tRNA ligase (576 aa).

The 'HIGH' region motif lies at P122–H132.

It belongs to the class-I aminoacyl-tRNA synthetase family. Monomer.

The protein localises to the cytoplasm. The enzyme catalyses tRNA(Arg) + L-arginine + ATP = L-arginyl-tRNA(Arg) + AMP + diphosphate. The chain is Arginine--tRNA ligase from Photorhabdus laumondii subsp. laumondii (strain DSM 15139 / CIP 105565 / TT01) (Photorhabdus luminescens subsp. laumondii).